We begin with the raw amino-acid sequence, 591 residues long: Probable translation initiation factor IF-2 (591 aa).

The tr-type G domain maps to 7-223 (LRTPIVCVMG…LLGLAQRFLE (217 aa)). The interval 16-23 (GHVDHGKT) is G1. 16–23 (GHVDHGKT) lines the GTP pocket. A G2 region spans residues 41-45 (AITQH). The segment at 78-81 (DTPG) is G3. GTP contacts are provided by residues 78–82 (DTPGH) and 132–135 (NKID). Residues 132–135 (NKID) are G4. Residues 200 to 202 (SAI) form a G5 region.

It belongs to the TRAFAC class translation factor GTPase superfamily. Classic translation factor GTPase family. IF-2 subfamily.

Function in general translation initiation by promoting the binding of the formylmethionine-tRNA to ribosomes. Seems to function along with eIF-2. The polypeptide is Probable translation initiation factor IF-2 (Methanococcoides burtonii (strain DSM 6242 / NBRC 107633 / OCM 468 / ACE-M)).